We begin with the raw amino-acid sequence, 307 residues long: Malate dehydrogenase (307 aa).

NAD(+)-binding positions include 8-13 and aspartate 33; that span reads GAGRVG. Residues arginine 82 and arginine 88 each coordinate substrate. NAD(+) contacts are provided by residues asparagine 95 and 118–120; that span reads VSN. Residues asparagine 120 and arginine 151 each contribute to the substrate site. Histidine 175 acts as the Proton acceptor in catalysis.

The protein belongs to the LDH/MDH superfamily. MDH type 3 family.

It carries out the reaction (S)-malate + NAD(+) = oxaloacetate + NADH + H(+). Its function is as follows. Catalyzes the reversible oxidation of malate to oxaloacetate. This chain is Malate dehydrogenase, found in Thioalkalivibrio sulfidiphilus (strain HL-EbGR7).